Consider the following 922-residue polypeptide: Protein translocase subunit SecA (922 aa).

ATP contacts are provided by residues glutamine 87, 105–109 (GEGKT), and aspartate 519. Residues 850–891 (HASRQMRSIQGNAQHNSMGSFSGSGHGMGPTALSARSRPENA) form a disordered region. The span at 854-865 (QMRSIQGNAQHN) shows a compositional bias: polar residues. Zn(2+) contacts are provided by cysteine 906, cysteine 908, cysteine 917, and cysteine 918.

This sequence belongs to the SecA family. In terms of assembly, monomer and homodimer. Part of the essential Sec protein translocation apparatus which comprises SecA, SecYEG and auxiliary proteins SecDF. Other proteins may also be involved. Zn(2+) serves as cofactor.

The protein localises to the cell inner membrane. The protein resides in the cytoplasm. It carries out the reaction ATP + H2O + cellular proteinSide 1 = ADP + phosphate + cellular proteinSide 2.. Its function is as follows. Part of the Sec protein translocase complex. Interacts with the SecYEG preprotein conducting channel. Has a central role in coupling the hydrolysis of ATP to the transfer of proteins into and across the cell membrane, serving as an ATP-driven molecular motor driving the stepwise translocation of polypeptide chains across the membrane. The chain is Protein translocase subunit SecA from Treponema denticola (strain ATCC 35405 / DSM 14222 / CIP 103919 / JCM 8153 / KCTC 15104).